Here is a 107-residue protein sequence, read N- to C-terminus: Iron-sulfur cluster assembly protein CyaY (107 aa).

This sequence belongs to the frataxin family.

Its function is as follows. Involved in iron-sulfur (Fe-S) cluster assembly. May act as a regulator of Fe-S biogenesis. The chain is Iron-sulfur cluster assembly protein CyaY from Edwardsiella ictaluri (strain 93-146).